The primary structure comprises 547 residues: CTP synthase (547 aa).

The interval 1-265 is amidoligase domain; that stretch reads MARYVFITGG…DQAVLDAFGI (265 aa). Position 13 (Ser-13) interacts with CTP. Position 13 (Ser-13) interacts with UTP. ATP-binding positions include 14–19 and Asp-71; that span reads SLGKGL. Mg(2+) contacts are provided by Asp-71 and Glu-139. Residues 146-148, 186-191, and Lys-222 contribute to the CTP site; these read DIE and KTKPTQ. Residues 186 to 191 and Lys-222 each bind UTP; that span reads KTKPTQ. Residues 291–546 enclose the Glutamine amidotransferase type-1 domain; it reads RVAIVGKYTQ…VRAAVEVSRL (256 aa). Gly-353 contacts L-glutamine. The active-site Nucleophile; for glutamine hydrolysis is the Cys-380. L-glutamine-binding positions include 381–384, Glu-404, and Arg-474; that span reads LGMQ. Catalysis depends on residues His-519 and Glu-521.

The protein belongs to the CTP synthase family. In terms of assembly, homotetramer.

It carries out the reaction UTP + L-glutamine + ATP + H2O = CTP + L-glutamate + ADP + phosphate + 2 H(+). The catalysed reaction is L-glutamine + H2O = L-glutamate + NH4(+). It catalyses the reaction UTP + NH4(+) + ATP = CTP + ADP + phosphate + 2 H(+). The protein operates within pyrimidine metabolism; CTP biosynthesis via de novo pathway; CTP from UDP: step 2/2. Its activity is regulated as follows. Allosterically activated by GTP, when glutamine is the substrate; GTP has no effect on the reaction when ammonia is the substrate. The allosteric effector GTP functions by stabilizing the protein conformation that binds the tetrahedral intermediate(s) formed during glutamine hydrolysis. Inhibited by the product CTP, via allosteric rather than competitive inhibition. Its function is as follows. Catalyzes the ATP-dependent amination of UTP to CTP with either L-glutamine or ammonia as the source of nitrogen. Regulates intracellular CTP levels through interactions with the four ribonucleotide triphosphates. In Cereibacter sphaeroides (strain ATCC 17023 / DSM 158 / JCM 6121 / CCUG 31486 / LMG 2827 / NBRC 12203 / NCIMB 8253 / ATH 2.4.1.) (Rhodobacter sphaeroides), this protein is CTP synthase.